A 148-amino-acid polypeptide reads, in one-letter code: Large ribosomal subunit protein uL15 (148 aa).

Residues 1-12 (MSDPIKLHDLRP) show a composition bias toward basic and acidic residues. Residues 1–45 (MSDPIKLHDLRPAKGANKAKTRVGRGEASKGKTAGRGTKGTKARN) form a disordered region.

This sequence belongs to the universal ribosomal protein uL15 family. In terms of assembly, part of the 50S ribosomal subunit.

In terms of biological role, binds to the 23S rRNA. The polypeptide is Large ribosomal subunit protein uL15 (Corynebacterium urealyticum (strain ATCC 43042 / DSM 7109)).